The sequence spans 267 residues: Undecaprenyl-diphosphatase (267 aa).

7 helical membrane passes run 4-24, 41-61, 69-89, 96-116, 173-193, 207-227, and 239-259; these read LYALILGIIEGLTEFLPISST, FWKSFLIIIQLGSILAVIFVF, LDIWLKLAVGFFPTGVIGLFV, LFNGWVVVGMLIFGGVVFILI, AAEFSFLLAIPTMIIATAYSI, IPLGIGFITAFIVAVLVIKFF, and FGIYRIILGFVFFYLYYSGIL.

The protein belongs to the UppP family.

The protein resides in the cell inner membrane. The catalysed reaction is di-trans,octa-cis-undecaprenyl diphosphate + H2O = di-trans,octa-cis-undecaprenyl phosphate + phosphate + H(+). Functionally, catalyzes the dephosphorylation of undecaprenyl diphosphate (UPP). Confers resistance to bacitracin. The sequence is that of Undecaprenyl-diphosphatase from Campylobacter jejuni subsp. jejuni serotype O:2 (strain ATCC 700819 / NCTC 11168).